The primary structure comprises 702 residues: Methionine--tRNA ligase (702 aa).

The 'HIGH' region signature appears at 14 to 24 (PYANGPVHLGH). Positions 146, 149, 159, and 162 each coordinate Zn(2+). A 'KMSKS' region motif is present at residues 344-348 (KFSKS). Lys347 contacts ATP. The tRNA-binding domain occupies 601 to 702 (DFQKVDLRAA…GEKINGSSVQ (102 aa)).

It belongs to the class-I aminoacyl-tRNA synthetase family. MetG type 1 subfamily. Homodimer. Zn(2+) is required as a cofactor.

Its subcellular location is the cytoplasm. It carries out the reaction tRNA(Met) + L-methionine + ATP = L-methionyl-tRNA(Met) + AMP + diphosphate. Functionally, is required not only for elongation of protein synthesis but also for the initiation of all mRNA translation through initiator tRNA(fMet) aminoacylation. This chain is Methionine--tRNA ligase, found in Chlorobium phaeovibrioides (strain DSM 265 / 1930) (Prosthecochloris vibrioformis (strain DSM 265)).